Consider the following 388-residue polypeptide: Type II secretion system protein F (388 aa).

A disordered region spans residues 1 to 28; sequence MTEGDSARQVRQQLREQGLTPLEVNETT. Residues 1–153 are Cytoplasmic-facing; sequence MTEGDSARQV…HMRTKLLQAM (153 aa). 3 residues coordinate Ca(2+): Glu-79, Asn-133, and Asp-137. The helical transmembrane segment at 154-174 threads the bilayer; that stretch reads IYPIVLTLVAVGVISILLTAV. At 175–205 the chain is on the periplasmic side; it reads VPKVVAQFEHMGQQLPATTRFLIGTSELMQH. Residues 206 to 226 traverse the membrane as a helical segment; that stretch reads YGLWFLLLLFIGGFVWRWWLT. Residues 227–350 lie on the Cytoplasmic side of the membrane; that stretch reads DEKRRRHWHQ…QDREFETQVN (124 aa). Residues 351 to 371 form a helical membrane-spanning segment; sequence IALGVFEPLLVVSMAGVVLFI. The Periplasmic segment spans residues 372–388; the sequence is VMSILQPILELNNMVNL.

This sequence belongs to the GSP F family. As to quaternary structure, type II secretion system is composed of four main components: the outer membrane complex, the inner membrane complex, the cytoplasmic secretion ATPase and the periplasm-spanning pseudopilus. Homodimer. Interacts with ExeE and ExeL components.

The protein resides in the cell inner membrane. In terms of biological role, component of the type II secretion system inner membrane complex required for the energy-dependent secretion of extracellular factors such as proteases and toxins from the periplasm. The sequence is that of Type II secretion system protein F (exeF) from Aeromonas hydrophila.